A 447-amino-acid chain; its full sequence is Biotin carboxylase (447 aa).

Positions 1–447 (MKFDKILIAN…STSFVQEMNK (447 aa)) constitute a Biotin carboxylation domain. Residues lysine 117, lysine 159, 165–166 (GG), 201–204 (EKFI), and histidine 209 contribute to the ATP site. Residues 121-318 (KETMQKAGVP…LLVEQIRIAQ (198 aa)) form the ATP-grasp domain. Residue lysine 238 coordinates hydrogencarbonate. The ATP site is built by glutamate 276 and glutamate 289. Mg(2+) contacts are provided by glutamate 276, glutamate 289, and asparagine 291. 3 residues coordinate Mn(2+): glutamate 276, glutamate 289, and asparagine 291. Residues arginine 293, valine 296, and arginine 339 each contribute to the hydrogencarbonate site. Arginine 293 is an active-site residue. Biotin is bound at residue arginine 339.

In terms of assembly, acetyl-CoA carboxylase is a heterohexamer of biotin carboxyl carrier protein, biotin carboxylase and the two subunits of carboxyl transferase in a 2:2 complex. It depends on Mg(2+) as a cofactor. Requires Mn(2+) as cofactor.

The catalysed reaction is N(6)-biotinyl-L-lysyl-[protein] + hydrogencarbonate + ATP = N(6)-carboxybiotinyl-L-lysyl-[protein] + ADP + phosphate + H(+). It functions in the pathway lipid metabolism; malonyl-CoA biosynthesis; malonyl-CoA from acetyl-CoA: step 1/1. Its function is as follows. This protein is a component of the acetyl coenzyme A carboxylase complex; first, biotin carboxylase catalyzes the carboxylation of the carrier protein and then the transcarboxylase transfers the carboxyl group to form malonyl-CoA. The protein is Biotin carboxylase (accC) of Nostoc sp. (strain PCC 7120 / SAG 25.82 / UTEX 2576).